The following is a 474-amino-acid chain: HTH-type transcriptional regulator RamB (474 aa).

Residues 10 to 64 form the HTH cro/C1-type domain; that stretch reads VRQLRNERGFSQAALAQMLEISPSYLNQIEHDVRPLTVAVLLRITEVFGVDATFF. The H-T-H motif DNA-binding region spans 21–40; sequence QAALAQMLEISPSYLNQIEH.

This sequence belongs to the short-chain fatty acyl-CoA assimilation regulator (ScfR) family.

Its function is as follows. Involved in the control of the glyoxylate cycle. RamB negatively controls the expression of icl expression during growth on acetate as the sole carbon source. The chain is HTH-type transcriptional regulator RamB from Mycobacterium tuberculosis (strain CDC 1551 / Oshkosh).